Reading from the N-terminus, the 230-residue chain is Heptaprenylglyceryl phosphate synthase (230 aa).

K12 is a sn-glycerol 1-phosphate binding site. D14 and T40 together coordinate Mg(2+). Residues 159 to 164, G189, and 209 to 210 contribute to the sn-glycerol 1-phosphate site; these read YIEYSG and GD.

This sequence belongs to the GGGP/HepGP synthase family. Group I subfamily. Homodimer. Mg(2+) is required as a cofactor.

It catalyses the reaction sn-glycerol 1-phosphate + all-trans-heptaprenyl diphosphate = 3-heptaprenyl-sn-glycero-1-phosphate + diphosphate. The protein operates within membrane lipid metabolism; glycerophospholipid metabolism. Functionally, prenyltransferase that catalyzes in vivo the transfer of the heptaprenyl moiety of heptaprenyl pyrophosphate (HepPP; 35 carbon atoms) to the C3 hydroxyl of sn-glycerol-1-phosphate (G1P), producing heptaprenylglyceryl phosphate (HepGP). This reaction is an ether-bond-formation step in the biosynthesis of archaea-type G1P-based membrane lipids found in Bacillales. In Staphylococcus aureus (strain bovine RF122 / ET3-1), this protein is Heptaprenylglyceryl phosphate synthase.